A 282-amino-acid polypeptide reads, in one-letter code: Acetyl-coenzyme A carboxylase carboxyl transferase subunit beta (282 aa).

Positions 25–282 constitute a CoA carboxyltransferase N-terminal domain; the sequence is VWRKCPHCNE…SQMLRIFMKQ (258 aa). Residues C29, C32, C48, and C51 each coordinate Zn(2+). The segment at 29–51 adopts a C4-type zinc-finger fold; sequence CPHCNEIIYAKEIERNLNVCPKC.

Belongs to the AccD/PCCB family. Acetyl-CoA carboxylase is a heterohexamer composed of biotin carboxyl carrier protein (AccB), biotin carboxylase (AccC) and two subunits each of ACCase subunit alpha (AccA) and ACCase subunit beta (AccD). Requires Zn(2+) as cofactor.

The protein resides in the cytoplasm. It carries out the reaction N(6)-carboxybiotinyl-L-lysyl-[protein] + acetyl-CoA = N(6)-biotinyl-L-lysyl-[protein] + malonyl-CoA. The protein operates within lipid metabolism; malonyl-CoA biosynthesis; malonyl-CoA from acetyl-CoA: step 1/1. In terms of biological role, component of the acetyl coenzyme A carboxylase (ACC) complex. Biotin carboxylase (BC) catalyzes the carboxylation of biotin on its carrier protein (BCCP) and then the CO(2) group is transferred by the transcarboxylase to acetyl-CoA to form malonyl-CoA. This chain is Acetyl-coenzyme A carboxylase carboxyl transferase subunit beta, found in Syntrophotalea carbinolica (strain DSM 2380 / NBRC 103641 / GraBd1) (Pelobacter carbinolicus).